Consider the following 287-residue polypeptide: 3-methyl-2-oxobutanoate hydroxymethyltransferase (287 aa).

The segment covering 1–19 (MSTLPKTLTLDTSTSRANP) has biased composition (polar residues). Residues 1–24 (MSTLPKTLTLDTSTSRANPTPQPM) form a disordered region. 2 residues coordinate Mg(2+): Asp-66 and Asp-105. 3-methyl-2-oxobutanoate contacts are provided by residues 66-67 (DS), Asp-105, and Lys-135. Glu-137 is a Mg(2+) binding site. The active-site Proton acceptor is the Glu-204.

This sequence belongs to the PanB family. As to quaternary structure, homodecamer; pentamer of dimers. Requires Mg(2+) as cofactor.

Its subcellular location is the cytoplasm. The catalysed reaction is 3-methyl-2-oxobutanoate + (6R)-5,10-methylene-5,6,7,8-tetrahydrofolate + H2O = 2-dehydropantoate + (6S)-5,6,7,8-tetrahydrofolate. It participates in cofactor biosynthesis; (R)-pantothenate biosynthesis; (R)-pantoate from 3-methyl-2-oxobutanoate: step 1/2. Functionally, catalyzes the reversible reaction in which hydroxymethyl group from 5,10-methylenetetrahydrofolate is transferred onto alpha-ketoisovalerate to form ketopantoate. The polypeptide is 3-methyl-2-oxobutanoate hydroxymethyltransferase (Sphingopyxis alaskensis (strain DSM 13593 / LMG 18877 / RB2256) (Sphingomonas alaskensis)).